The chain runs to 475 residues: 7-dehydrocholesterol reductase (475 aa).

Positions 1–21 are disordered; that stretch reads MAAKSQPSAPKTKSTSGLTNG. Phosphoserine is present on serine 14. A run of 6 helical transmembrane segments spans residues 40-60, 151-173, 178-200, 266-286, 306-326, and 331-351; these read LASV…FIMA, WLLT…PTII, IPLL…VKGY, VTNS…DFFW, LGWG…LYLV, and QLPT…YYIF. Residues lysine 358, arginine 362, leucine 395, tryptophan 400, and 407-408 contribute to the NADP(+) site; that span reads NY. The chain crosses the membrane as a helical span at residues 420–440; the sequence is LACGGGHLLPYFYIIFMAILL. Residues aspartate 447, 451–455, and tyrosine 462 each bind NADP(+); that span reads CANKY.

This sequence belongs to the ERG4/ERG24 family. In terms of assembly, interacts with DHCR24; this interaction regulates DHCR7 activity. Interacts with TMEM147.

The protein resides in the endoplasmic reticulum membrane. The enzyme catalyses cholesterol + NADP(+) = 7-dehydrocholesterol + NADPH + H(+). It catalyses the reaction 7-dehydrodesmosterol + NADPH + H(+) = desmosterol + NADP(+). It carries out the reaction 5,6alpha-epoxy-5alpha-cholestan-3beta-ol + H2O = 5alpha-cholestane-3beta,5,6beta-triol. The catalysed reaction is 5,6beta-epoxy-5beta-cholestan-3beta-ol + H2O = 5alpha-cholestane-3beta,5,6beta-triol. It functions in the pathway steroid biosynthesis; cholesterol biosynthesis. Its function is as follows. Oxidoreductase that catalyzes the last step of the cholesterol synthesis pathway, which transforms cholesta-5,7-dien-3beta-ol (7-dehydrocholesterol,7-DHC) into cholesterol by reducing the C7-C8 double bond of its sterol core. Can also metabolize cholesta-5,7,24-trien-3beta-ol (7-dehydrodemosterol, 7-DHD) to desmosterol, which is then metabolized by the Delta(24)-sterol reductase (DHCR24) to cholesterol. Modulates ferroptosis (a form of regulated cell death driven by iron-dependent lipid peroxidation) through the metabolic breakdown of the anti-ferroptotic metabolites 7-DHC and 7-DHD which, when accumulated, divert the propagation of peroxyl radical-mediated damage from phospholipid components to its sterol core, protecting plasma and mitochondrial membranes from phospholipid autoxidation. Functionally, component of the microsomal antiestrogen binding site (AEBS), a multiproteic complex at the ER membrane that consists of an association between cholestenol Delta-isomerase/EBP and DHCR7. This complex is responsible for cholesterol-5,6-epoxide hydrolase (ChEH) activity, which consists in the hydration of cholesterol-5,6-epoxides (5,6-EC) into cholestane-3beta,5alpha,6beta-triol (CT). The precise role of each component of this complex has not been described yet. In Bos taurus (Bovine), this protein is 7-dehydrocholesterol reductase (DHCR7).